Consider the following 486-residue polypeptide: Probable transporter MCH1 (486 aa).

12 helical membrane passes run 31-51 (IFAL…FSMY), 68-88 (SVSI…GYLG), 95-115 (YLAL…SGIF), 135-155 (EMAL…YASL), 174-194 (TYTP…SSLW), 211-231 (VAGI…IIFF), 268-288 (FFTD…GGPF), 312-333 (FSTH…VGFS), 349-369 (VIAL…FTVF), 377-397 (VVTI…PTIV), 409-429 (IWGS…LLFA), and 457-477 (FVIT…IWVF).

The protein belongs to the major facilitator superfamily.

The protein resides in the vacuole membrane. Its function is as follows. Probable transporter. In Yarrowia lipolytica (strain CLIB 122 / E 150) (Yeast), this protein is Probable transporter MCH1 (MCH1).